The following is a 365-amino-acid chain: tRNA-specific 2-thiouridylase MnmA (365 aa).

Residues 12-19 (AMSGGVDS) and Met38 each bind ATP. Cys108 functions as the Nucleophile in the catalytic mechanism. Cys108 and Cys206 are joined by a disulfide. Gly132 lines the ATP pocket. Positions 156-158 (KDQ) are interaction with tRNA. Cys206 serves as the catalytic Cysteine persulfide intermediate. The tract at residues 312-313 (RY) is interaction with tRNA.

Belongs to the MnmA/TRMU family.

It localises to the cytoplasm. It carries out the reaction S-sulfanyl-L-cysteinyl-[protein] + uridine(34) in tRNA + AH2 + ATP = 2-thiouridine(34) in tRNA + L-cysteinyl-[protein] + A + AMP + diphosphate + H(+). Its function is as follows. Catalyzes the 2-thiolation of uridine at the wobble position (U34) of tRNA, leading to the formation of s(2)U34. This Carboxydothermus hydrogenoformans (strain ATCC BAA-161 / DSM 6008 / Z-2901) protein is tRNA-specific 2-thiouridylase MnmA.